The chain runs to 155 residues: Troponin C, body wall muscle (155 aa).

V1 bears the N-acetylvaline mark. EF-hand domains lie at 7 to 43 (DEKS…LGQN), 44 to 79 (PTEK…QMQA), 88 to 121 (REEK…TGEN), and 122 to 155 (VETW…KFVQ). Residues D57, D59, S61, T63, and E68 each contribute to the Ca(2+) site. D135, N137, D139, Q141, and E146 together coordinate Ca(2+).

Belongs to the troponin C family.

Functionally, troponin is the central regulatory protein of muscle contraction. Tn consists of three components: Tn-I which is the inhibitor of actomyosin ATPase, Tn-T which contains the binding site for tropomyosin and Tn-C. The binding of calcium to Tn-C abolishes the inhibitory action of Tn on actin filaments. This is Troponin C, body wall muscle from Halocynthia roretzi (Sea squirt).